The primary structure comprises 398 residues: Succinate--CoA ligase [ADP-forming] subunit beta (398 aa).

One can recognise an ATP-grasp domain in the interval 9 to 254; the sequence is KALLHEFGVP…ETEEDAKEIE (246 aa). ATP contacts are provided by residues Lys-46, 53–55, Glu-109, Ser-112, and Glu-117; that span reads GRG. Asn-209 and Asp-223 together coordinate Mg(2+). Substrate-binding positions include Asn-274 and 331–333; that span reads GIM.

It belongs to the succinate/malate CoA ligase beta subunit family. Heterotetramer of two alpha and two beta subunits. The cofactor is Mg(2+).

The catalysed reaction is succinate + ATP + CoA = succinyl-CoA + ADP + phosphate. The enzyme catalyses GTP + succinate + CoA = succinyl-CoA + GDP + phosphate. Its pathway is carbohydrate metabolism; tricarboxylic acid cycle; succinate from succinyl-CoA (ligase route): step 1/1. Succinyl-CoA synthetase functions in the citric acid cycle (TCA), coupling the hydrolysis of succinyl-CoA to the synthesis of either ATP or GTP and thus represents the only step of substrate-level phosphorylation in the TCA. The beta subunit provides nucleotide specificity of the enzyme and binds the substrate succinate, while the binding sites for coenzyme A and phosphate are found in the alpha subunit. The protein is Succinate--CoA ligase [ADP-forming] subunit beta of Bradyrhizobium sp. (strain BTAi1 / ATCC BAA-1182).